The sequence spans 45 residues: FLGTINLSLCEEERDADEEERRDEPDESNVEVKKRFFFLSRIFGK.

The first 10 residues, 1–10 (FLGTINLSLC), serve as a signal peptide directing secretion. A propeptide spanning residues 11–35 (EEERDADEEERRDEPDESNVEVKKR) is cleaved from the precursor. The residue at position 43 (F43) is a Phenylalanine amide.

The protein belongs to the frog skin active peptide (FSAP) family. Temporin subfamily.

It localises to the secreted. The protein resides in the target cell membrane. Its function is as follows. Non-amphipathic alpha-helical antimicrobial peptide with potent activity against some Gram-positive bacteria (including methicillin-resistant Staphylococcus aureus (MRSA)), weak activity against Gram-negative bacteria and no activity against fungi. Permeabilizates membranes through a detergent-like effect probably via the carpet mechanism. More precisely, it strongly and selectively perturbs anionic bilayers membranes by interacting with the polar headgroups and the glycerol backbone region of the phospholipids, hence disrupting the acyl chain packing of the bilayer. Is not active against Leishmania (promastigote and axenic amastigote forms). Does not show hemolytic activity. Does not show toxicity for human THP-1-derived macrophages. This is Temporin-SHf from Pelophylax saharicus (Sahara frog).